A 225-amino-acid chain; its full sequence is Biosynthetic peptidoglycan transglycosylase (225 aa).

Residues 9–29 (LLIFIGAILLIQLWIFSSLVW) traverse the membrane as a helical segment.

Belongs to the glycosyltransferase 51 family.

Its subcellular location is the cell inner membrane. It carries out the reaction [GlcNAc-(1-&gt;4)-Mur2Ac(oyl-L-Ala-gamma-D-Glu-L-Lys-D-Ala-D-Ala)](n)-di-trans,octa-cis-undecaprenyl diphosphate + beta-D-GlcNAc-(1-&gt;4)-Mur2Ac(oyl-L-Ala-gamma-D-Glu-L-Lys-D-Ala-D-Ala)-di-trans,octa-cis-undecaprenyl diphosphate = [GlcNAc-(1-&gt;4)-Mur2Ac(oyl-L-Ala-gamma-D-Glu-L-Lys-D-Ala-D-Ala)](n+1)-di-trans,octa-cis-undecaprenyl diphosphate + di-trans,octa-cis-undecaprenyl diphosphate + H(+). It functions in the pathway cell wall biogenesis; peptidoglycan biosynthesis. In terms of biological role, peptidoglycan polymerase that catalyzes glycan chain elongation from lipid-linked precursors. The polypeptide is Biosynthetic peptidoglycan transglycosylase (Acinetobacter baumannii (strain SDF)).